The following is a 554-amino-acid chain: Oxygen-dependent choline dehydrogenase (554 aa).

4–33 (DYIIIGAGSAGNVLATRLTEDPNTTVLLLE) provides a ligand contact to FAD. His-473 (proton acceptor) is an active-site residue.

The protein belongs to the GMC oxidoreductase family. FAD is required as a cofactor.

The catalysed reaction is choline + A = betaine aldehyde + AH2. It carries out the reaction betaine aldehyde + NAD(+) + H2O = glycine betaine + NADH + 2 H(+). It participates in amine and polyamine biosynthesis; betaine biosynthesis via choline pathway; betaine aldehyde from choline (cytochrome c reductase route): step 1/1. Functionally, involved in the biosynthesis of the osmoprotectant glycine betaine. Catalyzes the oxidation of choline to betaine aldehyde and betaine aldehyde to glycine betaine at the same rate. The protein is Oxygen-dependent choline dehydrogenase of Klebsiella pneumoniae (strain 342).